The following is a 548-amino-acid chain: Isocitrate dehydrogenase [NAD(+)] 1, mitochondrial (548 aa).

The N-terminal 53 residues, 1–53, are a transit peptide targeting the mitochondrion; it reads MSSLSTLRILHSTAGRRWASYYGIYPKSAACSSSSVAIARFFSTAADRPPKHA. Residues 132–134 and Asn-153 contribute to the NAD(+) site; that span reads TIT. D-threo-isocitrate contacts are provided by residues 151-157, Arg-187, Tyr-194, Lys-266, Asp-311, and Asp-335; that span reads SPNGAMR. Mg(2+) contacts are provided by Asp-311, Asp-335, and Asp-339. NAD(+) is bound by residues 372–377 and Asn-391; that span reads HGTVSD. The 36-residue stretch at 499 to 534 folds into the EF-hand domain; that stretch reads IDEEAINGLFQKYDKNGDGFIDFEEFTRMLVKMNLA. Ca(2+) is bound by residues Asp-512, Asn-514, Asp-516, Phe-518, and Glu-523.

The protein belongs to the isocitrate and isopropylmalate dehydrogenases family. In terms of assembly, homodimer. Mg(2+) serves as cofactor. It depends on Mn(2+) as a cofactor.

Its subcellular location is the mitochondrion. It catalyses the reaction D-threo-isocitrate + NAD(+) = 2-oxoglutarate + CO2 + NADH. With respect to regulation, the homodimer exhibits allosteric regulation by isocitrate. Activated by Mn(2+) and Mg(2+). No activation by Na(+), K(+) or Li(+). Inhibited by Co(2+), Cu(2+) and Ni(2+), but not with Ca(2+) in the presence of Mn(2+) or Mg(2+). Competitively inhibited by NADH, but no effect on activity by 1.0 mM citrate. Strongly inhibited by excess ATP, ADP, AMP and alpha-ketoglutarate. Functionally, performs an essential role in the oxidative function of the tricarboxylic acid cycle and respiration. Catalyzes the decarboxylation of isocitrate to produce 2-oxoglutarate and generate NADH to provide electrons for energy production. No activity with NADP(+). This chain is Isocitrate dehydrogenase [NAD(+)] 1, mitochondrial, found in Phaeodactylum tricornutum (strain CCAP 1055/1).